A 635-amino-acid polypeptide reads, in one-letter code: MARGLPTIASLARLCQKLNRLKPLEDSTMETSLRRCLSTLDLTLLGVGGMVGSGLYVLTGAVAKEVAGPAVLLSFGVAAVASLLAALCYAEFGARVPRTGSAYLFTYVSMGELWAFLIGWNVLLEYIIGGAAVARAWSGYLDSMFSHSIRNFTETHVGSWQVPLLGHYPDFLAAGIILLASAFVSCGARVSSWLNHTFSAISLLVILFIVILGFILAQPHNWSADEGGFAPFGFSGVMAGTASCFYAFVGFDVIAASSEEAQNPRRSVPLAIAISLAIAAGAYILVSTVLTLMVPWHSLDPDSALADAFYQRGYRWAGFIVAAGSICAMNTVLLSLLFSLPRIVYAMAADGLFFQVFAHVHPRTQVPVAGTLAFGLLTAFLALLLDLESLVQFLSLGTLLAYTFVATSIIVLRFQKSSPPSSPGPASPGPLTKQQSSFSDHLQLVGTVHASVPEPGELKPALRPYLGFLDGYSPGAVVTWALGVMLASAITIGCVLVFGNSTLHLPHWGYILLLLLTSVMFLLSLLVLGAHQQQYREDLFQIPMVPLIPALSIVLNICLMLKLSYLTWVRFSIWLLMGLAVYFGYGIRHSKENQRELPGLNSTHYVVFPRGSLEETVQAMQPPSQAPAQDPGHME.

3 consecutive transmembrane segments (helical) span residues 42-62 (LTLLGVGGMVGSGLYVLTGAV), 66-86 (VAGPAVLLSFGVAAVASLLAA), and 113-133 (LWAFLIGWNVLLEYIIGGAAV). N-linked (GlcNAc...) asparagine glycans are attached at residues Asn151 and Asn195. A helical transmembrane segment spans residues 197–217 (TFSAISLLVILFIVILGFILA). N-linked (GlcNAc...) asparagine glycosylation occurs at Asn221. Helical transmembrane passes span 229–249 (FAPFGFSGVMAGTASCFYAFV), 270–290 (LAIAISLAIAAGAYILVSTVL), 318–338 (GFIVAAGSICAMNTVLLSLLF), 365–385 (QVPVAGTLAFGLLTAFLALLL), and 391–411 (VQFLSLGTLLAYTFVATSIIV). Residues Ser422 and Ser427 each carry the phosphoserine modification. A helical transmembrane segment spans residues 478–498 (VTWALGVMLASAITIGCVLVF). N-linked (GlcNAc...) asparagine glycosylation occurs at Asn500. A run of 3 helical transmembrane segments spans residues 508–528 (WGYILLLLLTSVMFLLSLLVL), 539–559 (LFQIPMVPLIPALSIVLNICL), and 567–587 (TWVRFSIWLLMGLAVYFGYGI). An N-linked (GlcNAc...) asparagine glycan is attached at Asn601.

This sequence belongs to the amino acid-polyamine-organocation (APC) superfamily. Cationic amino acid transporter (CAT) (TC 2.A.3.3) family.

The protein resides in the membrane. In terms of biological role, involved in the transport of the cationic amino acids (arginine, lysine and ornithine). This Homo sapiens (Human) protein is Cationic amino acid transporter 4 (SLC7A4).